The following is a 420-amino-acid chain: Protein translocase subunit SecY (420 aa).

The next 10 membrane-spanning stretches (helical) occupy residues 9–29, 61–81, 104–124, 141–161, 173–193, 203–223, 257–277, 300–320, 355–375, and 377–397; these read ILIT…PIPG, LSII…MELL, IVRY…SVGL, VFMI…MWIG, ISLI…SGTF, ILML…IIYV, LSGV…STIL, YNIL…SIVF, KLTL…WILV, and AMGV…QVAI.

The protein belongs to the SecY/SEC61-alpha family. As to quaternary structure, component of the Sec protein translocase complex. Heterotrimer consisting of SecY, SecE and SecG subunits. The heterotrimers can form oligomers, although 1 heterotrimer is thought to be able to translocate proteins. Interacts with the ribosome. Interacts with SecDF, and other proteins may be involved. Interacts with SecA.

It localises to the cell inner membrane. The central subunit of the protein translocation channel SecYEG. Consists of two halves formed by TMs 1-5 and 6-10. These two domains form a lateral gate at the front which open onto the bilayer between TMs 2 and 7, and are clamped together by SecE at the back. The channel is closed by both a pore ring composed of hydrophobic SecY resides and a short helix (helix 2A) on the extracellular side of the membrane which forms a plug. The plug probably moves laterally to allow the channel to open. The ring and the pore may move independently. This chain is Protein translocase subunit SecY, found in Helicobacter pylori (strain J99 / ATCC 700824) (Campylobacter pylori J99).